Here is a 155-residue protein sequence, read N- to C-terminus: Probable cyclic pyranopterin monophosphate synthase (155 aa).

Residues 74-76 and 110-111 contribute to the substrate site; these read MCH and ME. Residue aspartate 125 is part of the active site.

The protein belongs to the MoaC family. In terms of assembly, homohexamer; trimer of dimers.

The enzyme catalyses (8S)-3',8-cyclo-7,8-dihydroguanosine 5'-triphosphate = cyclic pyranopterin phosphate + diphosphate. The protein operates within cofactor biosynthesis; molybdopterin biosynthesis. Functionally, catalyzes the conversion of (8S)-3',8-cyclo-7,8-dihydroguanosine 5'-triphosphate to cyclic pyranopterin monophosphate (cPMP). The polypeptide is Probable cyclic pyranopterin monophosphate synthase (Methanoregula boonei (strain DSM 21154 / JCM 14090 / 6A8)).